The chain runs to 363 residues: UDP-N-acetylglucosamine--N-acetylmuramyl-(pentapeptide) pyrophosphoryl-undecaprenol N-acetylglucosamine transferase (363 aa).

UDP-N-acetyl-alpha-D-glucosamine is bound by residues 10 to 12 (TGG), Asn124, Ser195, Ile248, and Gln293.

The protein belongs to the glycosyltransferase 28 family. MurG subfamily.

The protein localises to the cell membrane. The catalysed reaction is Mur2Ac(oyl-L-Ala-gamma-D-Glu-L-Lys-D-Ala-D-Ala)-di-trans,octa-cis-undecaprenyl diphosphate + UDP-N-acetyl-alpha-D-glucosamine = beta-D-GlcNAc-(1-&gt;4)-Mur2Ac(oyl-L-Ala-gamma-D-Glu-L-Lys-D-Ala-D-Ala)-di-trans,octa-cis-undecaprenyl diphosphate + UDP + H(+). It functions in the pathway cell wall biogenesis; peptidoglycan biosynthesis. In terms of biological role, cell wall formation. Catalyzes the transfer of a GlcNAc subunit on undecaprenyl-pyrophosphoryl-MurNAc-pentapeptide (lipid intermediate I) to form undecaprenyl-pyrophosphoryl-MurNAc-(pentapeptide)GlcNAc (lipid intermediate II). In Lacticaseibacillus casei (strain BL23) (Lactobacillus casei), this protein is UDP-N-acetylglucosamine--N-acetylmuramyl-(pentapeptide) pyrophosphoryl-undecaprenol N-acetylglucosamine transferase.